A 108-amino-acid polypeptide reads, in one-letter code: Ig kappa chain V region GOM (108 aa).

Residues 1–23 (DIVMTQTPLSLSVSPGEPASISC) form a framework-1 region. C23 and C88 are joined by a disulfide. The tract at residues 24 to 34 (RSSQSNLDYLN) is complementarity-determining-1. The tract at residues 35-49 (WYLQKAGQSPRLLPE) is framework-2. The disordered stretch occupies residues 44–66 (PRLLPEQDSQRASGVPDRFSGSG). The complementarity-determining-2 stretch occupies residues 50–56 (QDSQRAS). Positions 57–88 (GVPDRFSGSGSGTDFTLRIGRVEAEDAGIYYC) are framework-3. Positions 89–97 (MQRSFYPYT) are complementarity-determining-3. The framework-4 stretch occupies residues 98–107 (FGQGTRLEVR).

The protein is Ig kappa chain V region GOM of Canis lupus familiaris (Dog).